The primary structure comprises 546 residues: CTP synthase (546 aa).

The amidoligase domain stretch occupies residues 1-266 (MTTRYIFVTG…DQLVTKRFGI (266 aa)). Residue Ser-14 coordinates CTP. Residue Ser-14 coordinates UTP. ATP-binding positions include 15 to 20 (SLGKGI) and Asp-72. Positions 72 and 140 each coordinate Mg(2+). CTP is bound by residues 147-149 (DIE), 187-192 (KTKPTQ), and Lys-223. UTP is bound by residues 187-192 (KTKPTQ) and Lys-223. 239–241 (KDV) serves as a coordination point for ATP. Residues 291 to 542 (TIGMVGKYIE…VAAAAAYQKR (252 aa)) enclose the Glutamine amidotransferase type-1 domain. Gly-352 contributes to the L-glutamine binding site. Cys-379 acts as the Nucleophile; for glutamine hydrolysis in catalysis. Residues 380 to 383 (LGMQ), Glu-403, and Arg-470 contribute to the L-glutamine site. Catalysis depends on residues His-515 and Glu-517.

This sequence belongs to the CTP synthase family. As to quaternary structure, homotetramer.

It catalyses the reaction UTP + L-glutamine + ATP + H2O = CTP + L-glutamate + ADP + phosphate + 2 H(+). The enzyme catalyses L-glutamine + H2O = L-glutamate + NH4(+). It carries out the reaction UTP + NH4(+) + ATP = CTP + ADP + phosphate + 2 H(+). It participates in pyrimidine metabolism; CTP biosynthesis via de novo pathway; CTP from UDP: step 2/2. Allosterically activated by GTP, when glutamine is the substrate; GTP has no effect on the reaction when ammonia is the substrate. The allosteric effector GTP functions by stabilizing the protein conformation that binds the tetrahedral intermediate(s) formed during glutamine hydrolysis. Inhibited by the product CTP, via allosteric rather than competitive inhibition. Its function is as follows. Catalyzes the ATP-dependent amination of UTP to CTP with either L-glutamine or ammonia as the source of nitrogen. Regulates intracellular CTP levels through interactions with the four ribonucleotide triphosphates. The polypeptide is CTP synthase (Shewanella pealeana (strain ATCC 700345 / ANG-SQ1)).